Reading from the N-terminus, the 358-residue chain is Peptide chain release factor 1 (358 aa).

Q235 carries the post-translational modification N5-methylglutamine.

The protein belongs to the prokaryotic/mitochondrial release factor family. Methylated by PrmC. Methylation increases the termination efficiency of RF1.

The protein resides in the cytoplasm. Peptide chain release factor 1 directs the termination of translation in response to the peptide chain termination codons UAG and UAA. This is Peptide chain release factor 1 from Neisseria meningitidis serogroup B (strain ATCC BAA-335 / MC58).